Reading from the N-terminus, the 603-residue chain is Leucine-rich repeat-containing protein 40 (603 aa).

Residues 1 to 27 form a disordered region; it reads MAAARRARAGDPRAGFRRAAEEQSPAV. LRR repeat units follow at residues 83–104, 106–127, 129–150, 152–173, 175–196, 198–219, 221–242, 244–265, 266–286, 290–311, 313–335, 336–357, 401–422, 427–449, 451–473, 474–495, 497–518, 520–541, 544–565, and 567–588; these read DLTKLILASNQLRCLSEDVRLL, ALTVLDVHDNQLTSLPSALGQL, NLQKLDVSHNKLKSIPEELLQL, HLKGLLLQHNELSHLPDGFGQL, SLEELDLSNNHLTDIPKSFALL, NLVRLNLACNQLKDLPADISAM, SLRQLDCTKNYLESVPSELASM, SLEQLYLRKNKLRSLPELPSCK, LLKELHAGENQIEILNAENLK, SLSVLELRDNKIKSVPDEITLL, KLERLDLANNDISRLPYTLGNLS, QLKFLALEGNPLRTIRRDLLQK, TLKLLDYSEKQVAVIPDDVFSA, PVTSVNFSKNQLTAIPPRIVELK, SVCDVNFGFNKISSVSLELCTLH, KLTHLDIRNNVLTSLPEEMEAL, RLQVINLSFNRFKVFPSVLYRM, ALETILLSNNQVGSIDPLQLKK, QLGTLDLQNNDLLQVPPELGNC, and TLRTLLLEGNPFRTPRAAILAK.

The sequence is that of Leucine-rich repeat-containing protein 40 (LRRC40) from Gallus gallus (Chicken).